Here is a 308-residue protein sequence, read N- to C-terminus: Cilia- and flagella-associated protein 73 (308 aa).

Coiled-coil stretches lie at residues 34 to 143 (RLLE…LEPC) and 175 to 233 (AALR…WESK).

Belongs to the CFAP73 family.

It is found in the cytoplasm. It localises to the cytoskeleton. The protein resides in the cilium axoneme. May play a role in ciliary/flagellar motility by regulating the assembly and the activity of axonemal inner dynein arm. The sequence is that of Cilia- and flagella-associated protein 73 from Homo sapiens (Human).